The chain runs to 199 residues: NAD(P)H dehydrogenase (quinone) (199 aa).

One can recognise a Flavodoxin-like domain in the interval 4–190; it reads VLVLYYSAYG…AGARYQGKTI (187 aa). Residues 10-15 and 78-80 contribute to the FMN site; these read SAYGHI and TRF. Tyr12 provides a ligand contact to NAD(+). Trp98 is a substrate binding site. Residues 113–119 and His134 contribute to the FMN site; that span reads STATQHG.

Belongs to the WrbA family. It depends on FMN as a cofactor.

It catalyses the reaction a quinone + NADH + H(+) = a quinol + NAD(+). The enzyme catalyses a quinone + NADPH + H(+) = a quinol + NADP(+). The protein is NAD(P)H dehydrogenase (quinone) of Rhodopseudomonas palustris (strain BisB5).